The sequence spans 62 residues: ATP synthase subunit K, mitochondrial (62 aa).

Residues 14-30 (HHLAIATIGTVVALVAP) form a helical membrane-spanning segment.

F-type ATP synthases have 2 components, the catalytic core F(1) and the membrane-embedded component F(0), linked together by a central stalk and a peripheral stalk. The central stalk, also called rotor shaft, is often seen as part of F(1). The peripheral stalk is seen as part of F(0). F(0) contains the membrane channel next to the rotor. F-type ATP synthases form dimers but each monomer functions independently in ATP generation. The dimer consists of 18 different polypeptides: ATP1 (subunit alpha, part of F(1), 3 molecules per monomer), ATP2 (subunit beta, part of F(1), 3 molecules per monomer), ATP3 (subunit gamma, part of the central stalk), ATP4 (subunit b, part of the peripheral stalk), ATP5/OSCP (subunit 5/OSCP, part of the peripheral stalk), ATP6 (subunit a, part of the peripheral stalk), ATP7 (subunit d, part of the peripheral stalk), ATP8 (subunit 8, part of the peripheral stalk), OLI1 (subunit c, part of the rotor, 10 molecules per monomer), ATP14 (subunit h, part of the peripheral stalk), ATP15 (subunit epsilon, part of the central stalk), ATP16 (subunit delta, part of the central stalk), ATP17 (subunit f, part of the peripheral stalk), ATP18 (subunit i/j, part of the peripheral stalk). Dimer-specific subunits are ATP19 (subunit k, at interface between monomers), ATP20 (subunit g, at interface between monomers), TIM11 (subunit e, at interface between monomers). Also contains subunit L.

It is found in the mitochondrion inner membrane. Its function is as follows. Mitochondrial membrane ATP synthase (F(1)F(0) ATP synthase or Complex V) produces ATP from ADP in the presence of a proton gradient across the membrane which is generated by electron transport complexes of the respiratory chain. F-type ATP synthases consist of two structural domains, F(1) - containing the extramembraneous catalytic core, and F(0) - containing the membrane proton channel, linked together by a central stalk and a peripheral stalk. During catalysis, ATP synthesis in the catalytic domain of F(1) is coupled via a rotary mechanism of the central stalk subunits to proton translocation. Part of the complex F(0) domain. Minor subunit located with subunit a/ATP6 in the membrane. The K chain binds the dimeric form by interacting with the G and E chains. This Pichia angusta (Yeast) protein is ATP synthase subunit K, mitochondrial.